The sequence spans 320 residues: Probable movement protein (320 aa).

Active-site residues include His-144, Asp-171, and Ser-199. Disordered stretches follow at residues Arg-251–Arg-270 and Glu-286–Pro-320.

It belongs to the tobamoviruses movement protein family.

May play a role in virus cell to cell movement by increasing the size exclusion limit of plasmodesmata and forming a complex with viral RNA to assist its movement. May also have a papain-like protease activity and cleave the genome polyprotein. This Malus sylvestris (European crab apple) protein is Probable movement protein.